Consider the following 195-residue polypeptide: Large ribosomal subunit protein bL17 (195 aa).

The segment at 125–195 (ANRARRVGAS…PTQDSDADKS (71 aa)) is disordered. The span at 136–152 (QTAPVAAAAAPQAAVEP) shows a compositional bias: low complexity. Acidic residues-rich tracts occupy residues 153-173 (EATE…EDTT) and 183-195 (TDDP…ADKS).

This sequence belongs to the bacterial ribosomal protein bL17 family. In terms of assembly, part of the 50S ribosomal subunit. Contacts protein L32.

This Mycobacterium sp. (strain JLS) protein is Large ribosomal subunit protein bL17.